A 108-amino-acid chain; its full sequence is Class I hydrophobin 3 (108 aa).

Residues 1–17 (MFSRVFAVASLAALALA) form the signal peptide. Disulfide bonds link Cys26–Cys87, Cys33–Cys81, Cys34–Cys67, and Cys88–Cys101.

Belongs to the fungal hydrophobin family. In terms of assembly, self-assembles to form functional amyloid fibrils called rodlets. Self-assembly into fibrillar rodlets occurs spontaneously at hydrophobic:hydrophilic interfaces and the rodlets further associate laterally to form amphipathic monolayers.

Its subcellular location is the secreted. The protein localises to the cell wall. Functionally, aerial growth, conidiation, and dispersal of filamentous fungi in the environment rely upon a capability of their secreting small amphipathic proteins called hydrophobins (HPBs) with low sequence identity. Class I can self-assemble into an outermost layer of rodlet bundles on aerial cell surfaces, conferring cellular hydrophobicity that supports fungal growth, development and dispersal; whereas Class II form highly ordered films at water-air interfaces through intermolecular interactions but contribute nothing to the rodlet structure. The protein is Class I hydrophobin 3 of Pisolithus tinctorius (Dead man's foot).